Here is a 349-residue protein sequence, read N- to C-terminus: S-adenosylmethionine:tRNA ribosyltransferase-isomerase (349 aa).

It belongs to the QueA family. In terms of assembly, monomer.

It localises to the cytoplasm. The catalysed reaction is 7-aminomethyl-7-carbaguanosine(34) in tRNA + S-adenosyl-L-methionine = epoxyqueuosine(34) in tRNA + adenine + L-methionine + 2 H(+). It functions in the pathway tRNA modification; tRNA-queuosine biosynthesis. Its function is as follows. Transfers and isomerizes the ribose moiety from AdoMet to the 7-aminomethyl group of 7-deazaguanine (preQ1-tRNA) to give epoxyqueuosine (oQ-tRNA). The sequence is that of S-adenosylmethionine:tRNA ribosyltransferase-isomerase from Ruegeria sp. (strain TM1040) (Silicibacter sp.).